Reading from the N-terminus, the 451-residue chain is Methylenetetrahydrofolate--tRNA-(uracil-5-)-methyltransferase TrmFO (451 aa).

10-15 (GGGLAG) is an FAD binding site.

It belongs to the MnmG family. TrmFO subfamily. FAD is required as a cofactor.

The protein resides in the cytoplasm. The enzyme catalyses uridine(54) in tRNA + (6R)-5,10-methylene-5,6,7,8-tetrahydrofolate + NADH + H(+) = 5-methyluridine(54) in tRNA + (6S)-5,6,7,8-tetrahydrofolate + NAD(+). The catalysed reaction is uridine(54) in tRNA + (6R)-5,10-methylene-5,6,7,8-tetrahydrofolate + NADPH + H(+) = 5-methyluridine(54) in tRNA + (6S)-5,6,7,8-tetrahydrofolate + NADP(+). In terms of biological role, catalyzes the folate-dependent formation of 5-methyl-uridine at position 54 (M-5-U54) in all tRNAs. The protein is Methylenetetrahydrofolate--tRNA-(uracil-5-)-methyltransferase TrmFO of Anaeromyxobacter sp. (strain Fw109-5).